The following is a 432-amino-acid chain: Adenylosuccinate synthetase (432 aa).

GTP-binding positions include 12-18 (GDEGKGK) and 40-42 (GHT). The active-site Proton acceptor is the D13. Residues D13 and G40 each contribute to the Mg(2+) site. IMP-binding positions include 13-16 (DEGK), 38-41 (NAGH), T130, R144, Q225, T240, and R304. H41 functions as the Proton donor in the catalytic mechanism. Position 300–306 (300–306 (ATTGRPR)) interacts with substrate. Residues R306, 332–334 (KLD), and 414–416 (SVG) contribute to the GTP site.

It belongs to the adenylosuccinate synthetase family. In terms of assembly, homodimer. Mg(2+) is required as a cofactor.

The protein resides in the cytoplasm. The enzyme catalyses IMP + L-aspartate + GTP = N(6)-(1,2-dicarboxyethyl)-AMP + GDP + phosphate + 2 H(+). Its pathway is purine metabolism; AMP biosynthesis via de novo pathway; AMP from IMP: step 1/2. In terms of biological role, plays an important role in the de novo pathway of purine nucleotide biosynthesis. Catalyzes the first committed step in the biosynthesis of AMP from IMP. The sequence is that of Adenylosuccinate synthetase from Anaeromyxobacter sp. (strain K).